The sequence spans 72 residues: MPRKTETYKSIMLKLENIVASMDSSELSLENSLKSYEEGVKLCNKLYKILNEAEEKIKVLTEEGERDFDIES.

Belongs to the XseB family. Heterooligomer composed of large and small subunits.

The protein resides in the cytoplasm. The catalysed reaction is Exonucleolytic cleavage in either 5'- to 3'- or 3'- to 5'-direction to yield nucleoside 5'-phosphates.. Bidirectionally degrades single-stranded DNA into large acid-insoluble oligonucleotides, which are then degraded further into small acid-soluble oligonucleotides. In Clostridium kluyveri (strain NBRC 12016), this protein is Exodeoxyribonuclease 7 small subunit.